Consider the following 152-residue polypeptide: Cell division protein SepF (152 aa).

The tract at residues 21–56 (EYIETEQDHPEEHEQQKDKQPAYAQKPQGKQNVVSL) is disordered. The span at 26 to 40 (EQDHPEEHEQQKDKQ) shows a compositional bias: basic and acidic residues.

It belongs to the SepF family. As to quaternary structure, homodimer. Interacts with FtsZ.

The protein localises to the cytoplasm. Cell division protein that is part of the divisome complex and is recruited early to the Z-ring. Probably stimulates Z-ring formation, perhaps through the cross-linking of FtsZ protofilaments. Its function overlaps with FtsA. In Bacillus velezensis (strain DSM 23117 / BGSC 10A6 / LMG 26770 / FZB42) (Bacillus amyloliquefaciens subsp. plantarum), this protein is Cell division protein SepF.